Consider the following 255-residue polypeptide: 4-hydroxy-tetrahydrodipicolinate reductase (255 aa).

NAD(+) is bound by residues 9–14 (GFKGKM), D35, 89–91 (GTT), and 115–118 (APNF). Residue H145 is the Proton donor/acceptor of the active site. H146 provides a ligand contact to (S)-2,3,4,5-tetrahydrodipicolinate. K149 functions as the Proton donor in the catalytic mechanism. A (S)-2,3,4,5-tetrahydrodipicolinate-binding site is contributed by 155–156 (GT).

It belongs to the DapB family.

It is found in the cytoplasm. It carries out the reaction (S)-2,3,4,5-tetrahydrodipicolinate + NAD(+) + H2O = (2S,4S)-4-hydroxy-2,3,4,5-tetrahydrodipicolinate + NADH + H(+). The enzyme catalyses (S)-2,3,4,5-tetrahydrodipicolinate + NADP(+) + H2O = (2S,4S)-4-hydroxy-2,3,4,5-tetrahydrodipicolinate + NADPH + H(+). It functions in the pathway amino-acid biosynthesis; L-lysine biosynthesis via DAP pathway; (S)-tetrahydrodipicolinate from L-aspartate: step 4/4. Catalyzes the conversion of 4-hydroxy-tetrahydrodipicolinate (HTPA) to tetrahydrodipicolinate. The chain is 4-hydroxy-tetrahydrodipicolinate reductase from Streptococcus pneumoniae (strain P1031).